Consider the following 164-residue polypeptide: Phosphopantetheine adenylyltransferase (164 aa).

Ser-9 provides a ligand contact to substrate. ATP is bound by residues 9–10 (SF) and His-17. Substrate is bound by residues Lys-41, Leu-73, and Lys-87. ATP contacts are provided by residues 88–90 (GLR), Glu-98, and 122–128 (YSYLSSS).

This sequence belongs to the bacterial CoaD family. In terms of assembly, homohexamer. Mg(2+) serves as cofactor.

It localises to the cytoplasm. The catalysed reaction is (R)-4'-phosphopantetheine + ATP + H(+) = 3'-dephospho-CoA + diphosphate. It functions in the pathway cofactor biosynthesis; coenzyme A biosynthesis; CoA from (R)-pantothenate: step 4/5. Its function is as follows. Reversibly transfers an adenylyl group from ATP to 4'-phosphopantetheine, yielding dephospho-CoA (dPCoA) and pyrophosphate. The chain is Phosphopantetheine adenylyltransferase from Rhodococcus opacus (strain B4).